The sequence spans 456 residues: Chromosomal replication initiator protein DnaA (456 aa).

The domain I, interacts with DnaA modulators stretch occupies residues 1 to 85 (MDADLNKLWE…EIKFIIESDL (85 aa)). Residues 85–117 (LNNEDELNNSDNSDKNRDKNSRRNIVVNDEMSS) are domain II. The tract at residues 118-334 (TLNPKYTFNS…GALIRIIAYS (217 aa)) is domain III, AAA+ region. The ATP site is built by Gly162, Gly164, Lys165, and Thr166. Positions 335–456 (SLTNREVTVD…SDITKKVSQN (122 aa)) are domain IV, binds dsDNA.

The protein belongs to the DnaA family. As to quaternary structure, oligomerizes as a right-handed, spiral filament on DNA at oriC.

The protein localises to the cytoplasm. In terms of biological role, plays an essential role in the initiation and regulation of chromosomal replication. ATP-DnaA binds to the origin of replication (oriC) to initiate formation of the DNA replication initiation complex once per cell cycle. Binds the DnaA box (a 9 base pair repeat at the origin) and separates the double-stranded (ds)DNA. Forms a right-handed helical filament on oriC DNA; dsDNA binds to the exterior of the filament while single-stranded (ss)DNA is stabiized in the filament's interior. The ATP-DnaA-oriC complex binds and stabilizes one strand of the AT-rich DNA unwinding element (DUE), permitting loading of DNA polymerase. After initiation quickly degrades to an ADP-DnaA complex that is not apt for DNA replication. Binds acidic phospholipids. The sequence is that of Chromosomal replication initiator protein DnaA from Clostridium botulinum (strain Eklund 17B / Type B).